An 861-amino-acid chain; its full sequence is Protein argonaute-4 (861 aa).

Residues P219–A338 form the PAZ domain. Residues L509–V820 enclose the Piwi domain. The tract at residues D825–K846 is disordered.

This sequence belongs to the argonaute family. Ago subfamily. Interacts with EIF4B, IMP8, PRMT5, TNRC6A and TNRC6B. Interacts with ZFP36. Ubiquitinated on surface-exposed lysines by a SCF-like E3 ubiquitin-protein ligase complex containing ZSWIM8 during target-directed microRNA degradation (TDMD), a process that mediates degradation of microRNAs (miRNAs). Ubiquitination by the SCF-like E3 ubiquitin-protein ligase complex containing ZSWIM8 leads to its subsequent degradation, thereby exposing miRNAs for degradation. ZSWIM8 recognizes and binds AGO4 when it is engaged with a TDMD target.

The protein resides in the cytoplasm. It is found in the P-body. Functionally, required for RNA-mediated gene silencing (RNAi). Binds to short RNAs such as microRNAs (miRNAs) and represses the translation of mRNAs which are complementary to them. Lacks endonuclease activity and does not appear to cleave target mRNAs. Also required for RNA-directed transcription and replication of the human hapatitis delta virus (HDV). In Homo sapiens (Human), this protein is Protein argonaute-4 (AGO4).